Here is a 341-residue protein sequence, read N- to C-terminus: HTH-type transcriptional repressor PurR (341 aa).

Residues alanine 2–valine 56 enclose the HTH lacI-type domain. The H-T-H motif DNA-binding region spans isoleucine 4 to asparagine 23. Residues serine 48–valine 56 mediate DNA binding. 5 residues coordinate hypoxanthine: tyrosine 73, arginine 190, threonine 192, phenylalanine 221, and aspartate 275.

As to quaternary structure, homodimer.

It functions in the pathway purine metabolism; purine nucleotide biosynthesis [regulation]. In terms of biological role, is the main repressor of the genes involved in the de novo synthesis of purine nucleotides, regulating purB, purC, purEK, purF, purHD, purL, purMN and guaBA expression. PurR is allosterically activated to bind its cognate DNA by binding the purine corepressors, hypoxanthine or guanine, thereby effecting transcription repression. The chain is HTH-type transcriptional repressor PurR from Pectobacterium carotovorum subsp. carotovorum (strain PC1).